We begin with the raw amino-acid sequence, 371 residues long: UDP-N-acetylglucosamine--N-acetylmuramyl-(pentapeptide) pyrophosphoryl-undecaprenol N-acetylglucosamine transferase (371 aa).

UDP-N-acetyl-alpha-D-glucosamine is bound by residues 15–17 (TGG), N126, R172, S199, I256, 275–280 (ALTVSE), and Q301.

It belongs to the glycosyltransferase 28 family. MurG subfamily.

The protein resides in the cell inner membrane. It carries out the reaction di-trans,octa-cis-undecaprenyl diphospho-N-acetyl-alpha-D-muramoyl-L-alanyl-D-glutamyl-meso-2,6-diaminopimeloyl-D-alanyl-D-alanine + UDP-N-acetyl-alpha-D-glucosamine = di-trans,octa-cis-undecaprenyl diphospho-[N-acetyl-alpha-D-glucosaminyl-(1-&gt;4)]-N-acetyl-alpha-D-muramoyl-L-alanyl-D-glutamyl-meso-2,6-diaminopimeloyl-D-alanyl-D-alanine + UDP + H(+). Its pathway is cell wall biogenesis; peptidoglycan biosynthesis. Cell wall formation. Catalyzes the transfer of a GlcNAc subunit on undecaprenyl-pyrophosphoryl-MurNAc-pentapeptide (lipid intermediate I) to form undecaprenyl-pyrophosphoryl-MurNAc-(pentapeptide)GlcNAc (lipid intermediate II). The protein is UDP-N-acetylglucosamine--N-acetylmuramyl-(pentapeptide) pyrophosphoryl-undecaprenol N-acetylglucosamine transferase of Francisella tularensis subsp. mediasiatica (strain FSC147).